The following is a 188-amino-acid chain: dITP/XTP pyrophosphatase (188 aa).

10–15 contributes to the substrate binding site; that stretch reads TSNPHK. Residues E39 and D69 each contribute to the Mg(2+) site. The active-site Proton acceptor is D69. Substrate-binding positions include S70, 145–148, K168, and 173–174; these read FGFD and HR.

This sequence belongs to the HAM1 NTPase family. As to quaternary structure, homodimer. Requires Mg(2+) as cofactor.

The catalysed reaction is XTP + H2O = XMP + diphosphate + H(+). The enzyme catalyses dITP + H2O = dIMP + diphosphate + H(+). It carries out the reaction ITP + H2O = IMP + diphosphate + H(+). Pyrophosphatase that catalyzes the hydrolysis of nucleoside triphosphates to their monophosphate derivatives, with a high preference for the non-canonical purine nucleotides XTP (xanthosine triphosphate), dITP (deoxyinosine triphosphate) and ITP. Seems to function as a house-cleaning enzyme that removes non-canonical purine nucleotides from the nucleotide pool, thus preventing their incorporation into DNA/RNA and avoiding chromosomal lesions. The polypeptide is dITP/XTP pyrophosphatase (Ignicoccus hospitalis (strain KIN4/I / DSM 18386 / JCM 14125)).